The following is a 261-amino-acid chain: Glucanase inhibitor protein 3 (261 aa).

The N-terminal stretch at 1–21 is a signal peptide; it reads MKVLSSLAAALIALSAVDVEA. Residues 29–260 form the Peptidase S1 domain; that stretch reads ILGGGKVPVG…GIEWINSVIK (232 aa). A disulfide bond links cysteine 56 and cysteine 72. Asparagine 108 carries an N-linked (GlcNAc...) asparagine glycan. 2 disulfides stabilise this stretch: cysteine 183–cysteine 195 and cysteine 205–cysteine 236.

The protein belongs to the peptidase S1 family.

The protein localises to the secreted. In terms of biological role, secreted effector that suppresses host plant glucan elicitor-mediated defense responses. Targets host endoglucanases and inhibits the endoglucanase-mediated release of elicitor-active glucan oligosaccharides from P.sojae cell walls. In Phytophthora sojae (strain P6497) (Soybean stem and root rot agent), this protein is Glucanase inhibitor protein 3 (GIP3).